Here is a 346-residue protein sequence, read N- to C-terminus: Syntaxin UFE1 (346 aa).

Residues Met-1–Thr-324 lie on the Cytoplasmic side of the membrane. Positions Leu-255–Ala-317 constitute a t-SNARE coiled-coil homology domain. A helical; Anchor for type IV membrane protein membrane pass occupies residues Ala-325 to Leu-342. The Lumenal segment spans residues Asp-343–Gly-346.

It belongs to the syntaxin family. In terms of assembly, component of a SNARE complex consisting of UFE1, USE1, SEC20 and SEC22 or YKT6.

It is found in the endoplasmic reticulum membrane. Its function is as follows. Syntaxin required for targeting and fusion of Golgi-derived retrograde transport vesicles with the ER. This is Syntaxin UFE1 (UFE1) from Saccharomyces cerevisiae (strain ATCC 204508 / S288c) (Baker's yeast).